Consider the following 262-residue polypeptide: GDT1-like protein C186.05c (262 aa).

5 helical membrane passes run 31-51, 57-77, 83-103, 208-228, and 242-262; these read ISMI…ALLA, ASVF…AVLV, FLFP…IFGV, VLDV…VAVI, and VLFF…FQGF.

Belongs to the GDT1 family.

The protein resides in the endoplasmic reticulum membrane. The sequence is that of GDT1-like protein C186.05c from Schizosaccharomyces pombe (strain 972 / ATCC 24843) (Fission yeast).